The chain runs to 311 residues: MKVAVLGAAGGIGQALALLLKTQLPSGSDLSLYDIAPVTPGVAVDLSHIPTAVNIKGFSGEDATPALKGADIVLISAGVARKPGMDRSDLFNVNAGIVRNLVEQIARTCPKALIGIITNPVNTTVAIAAEVLKKAGVYDKNKLFGITTLDTIRSNTFVAELKGKQPQDIEVPVIGGHSGVTILPLLSQIPGISFTEQEVIDLTKRIQNAGTEVVEAKAGGGSATLSMGQAAARFGLSLVRALQGESNVVECSYVEGDGKYARFFAQPILLGKDGVAERKDIGKLSAFEQQALENMLDVLHKDIELGEQFVK.

NAD(+)-binding positions include 7–13 (GAAGGIG) and D34. Substrate is bound by residues R81 and R87. NAD(+) is bound by residues N94 and 117 to 119 (ITN). Substrate-binding residues include N119 and R153. H177 serves as the catalytic Proton acceptor. M227 serves as a coordination point for NAD(+).

The protein belongs to the LDH/MDH superfamily. MDH type 1 family. In terms of assembly, homodimer.

The catalysed reaction is (S)-malate + NAD(+) = oxaloacetate + NADH + H(+). Functionally, catalyzes the reversible oxidation of malate to oxaloacetate. In Yersinia enterocolitica serotype O:8 / biotype 1B (strain NCTC 13174 / 8081), this protein is Malate dehydrogenase.